Here is a 481-residue protein sequence, read N- to C-terminus: Tetratricopeptide repeat protein 29 (481 aa).

Residues 1 to 18 (MASVGPVKTKTVTLKELT) are compositionally biased toward low complexity. Positions 1 to 53 (MASVGPVKTKTVTLKELTPPIPSPEKSACKGAKPDSNHMALVPVKPSQPGSGK) are disordered. TPR repeat units follow at residues 191 to 224 (CERC…AMES), 231 to 264 (QEVR…AMAL), 271 to 310 (VEAN…SQRV), 317 to 350 (ADSL…ARAA), 357 to 390 (KRAS…SEKA), and 397 to 430 (YRAT…ARKL).

As to quaternary structure, interacts with TAX-1.

The protein localises to the cytoplasm. It is found in the cytoskeleton. The protein resides in the flagellum axoneme. Axonemal protein which is implicated in axonemal and/or peri-axonemal structure assembly and regulates flagellum assembly and beating. The sequence is that of Tetratricopeptide repeat protein 29 from Trypanosoma brucei brucei (strain 927/4 GUTat10.1).